The primary structure comprises 1190 residues: ATPase histone chaperone abo1 (1190 aa).

The segment covering 1–11 (MKEEASEHGGS) has biased composition (basic and acidic residues). Disordered stretches follow at residues 1–185 (MKEE…RKTH) and 204–253 (YIDS…DLAD). Acidic residues-rich tracts occupy residues 52–62 (QEDEGDEDWEE) and 82–106 (SEGDDEPFEVSESSALEDELSDSED). Over residues 112-131 (VRSKPKYKPGTRRSTRLRNR) the composition is skewed to basic residues. The segment covering 141–152 (EEHRPILRERTS) has biased composition (basic and acidic residues). Residue 309–314 (PGTGKT) participates in ATP binding. The Bromo domain occupies 794–922 (RLLNKLKIKL…ANVLLGVEDM (129 aa)).

Belongs to the AAA ATPase family. As to quaternary structure, homohexamer. Interacts with the FACT complex subunits spt16 and pob3. Interacts with histone H3-H4 (via N-terminus).

The protein resides in the nucleus. Its subcellular location is the chromosome. The enzyme catalyses ATP + H2O = ADP + phosphate + H(+). Functionally, ATPase histone chaperone which facilitates loading of histone H3-H4 onto DNA in an ATP-dependent manner. Plays a genome-wide role in nucleosome organization and establishment of chromatin. Also plays a role in heterochromatin assembly by stabilizing recruitment of the histone methyltransferase clr4 to methylated histone H3, to promote the transition from H3K9me2 to H3K9me3. The polypeptide is ATPase histone chaperone abo1 (Schizosaccharomyces pombe (strain 972 / ATCC 24843) (Fission yeast)).